A 54-amino-acid chain; its full sequence is MFSWALVFLIFALVAGVLGFTGLAGTASSIAWILFVVGLIVSLIFLVAGRRPTV.

2 helical membrane-spanning segments follow: residues 4-24 and 29-49; these read WALV…TGLA and SIAW…LVAG.

The protein belongs to the UPF0391 family.

The protein localises to the cell membrane. This Teredinibacter turnerae (strain ATCC 39867 / T7901) protein is UPF0391 membrane protein TERTU_3637.